Here is a 213-residue protein sequence, read N- to C-terminus: Orotate phosphoribosyltransferase (213 aa).

Position 26 (lysine 26) interacts with 5-phospho-alpha-D-ribose 1-diphosphate. Residue 34–35 (FF) coordinates orotate. 5-phospho-alpha-D-ribose 1-diphosphate is bound by residues 72–73 (YK), arginine 99, lysine 100, lysine 103, histidine 105, and 124–132 (DDVITAGTA). 2 residues coordinate orotate: threonine 128 and arginine 156.

It belongs to the purine/pyrimidine phosphoribosyltransferase family. PyrE subfamily. In terms of assembly, homodimer. Requires Mg(2+) as cofactor.

It carries out the reaction orotidine 5'-phosphate + diphosphate = orotate + 5-phospho-alpha-D-ribose 1-diphosphate. The protein operates within pyrimidine metabolism; UMP biosynthesis via de novo pathway; UMP from orotate: step 1/2. Catalyzes the transfer of a ribosyl phosphate group from 5-phosphoribose 1-diphosphate to orotate, leading to the formation of orotidine monophosphate (OMP). In Vibrio cholerae serotype O1 (strain ATCC 39315 / El Tor Inaba N16961), this protein is Orotate phosphoribosyltransferase.